The primary structure comprises 211 residues: Large ribosomal subunit protein uL3 (211 aa).

Glutamine 150 carries the post-translational modification N5-methylglutamine.

It belongs to the universal ribosomal protein uL3 family. As to quaternary structure, part of the 50S ribosomal subunit. Forms a cluster with proteins L14 and L19. Methylated by PrmB.

Its function is as follows. One of the primary rRNA binding proteins, it binds directly near the 3'-end of the 23S rRNA, where it nucleates assembly of the 50S subunit. The sequence is that of Large ribosomal subunit protein uL3 from Stutzerimonas stutzeri (strain A1501) (Pseudomonas stutzeri).